Consider the following 1113-residue polypeptide: StAR-related lipid transfer protein 13 (1113 aa).

The residue at position 1 (Met-1) is an N-acetylmethionine. Residues 55-122 (QQEIEAKEAC…LNKCASMRLD (68 aa)) enclose the SAM domain. Disordered stretches follow at residues 164 to 218 (PVAD…HSAD), 230 to 256 (SSLP…RTRA), and 308 to 343 (NGDL…STVS). The segment covering 179–188 (NTASSESVLT) has biased composition (polar residues). The segment covering 197–214 (SIHSESSGGSDSRSQSGH) has biased composition (low complexity). Polar residues predominate over residues 230–245 (SSLPQSTREGLNQSFH). The segment covering 322–340 (GLPCSSKSSGESSPLENSS) has biased composition (low complexity). Position 411 is a phosphoserine (Ser-411). 2 stretches are compositionally biased toward polar residues: residues 421-435 (SNGV…SLGR) and 529-549 (PNQV…TTPS). Disordered regions lie at residues 421–443 (SNGV…GMRE) and 514–578 (HSTL…GASL). Positions 663 to 868 (VPLIVHVQRT…HMITECNRLF (206 aa)) constitute a Rho-GAP domain. In terms of domain architecture, START spans 899–1109 (LAESGATFHT…SFQPLVAEGP (211 aa)).

As to quaternary structure, homodimer. Interacts with TAX1BP1.

It is found in the cytoplasm. The protein localises to the membrane. Its subcellular location is the mitochondrion membrane. The protein resides in the lipid droplet. Its function is as follows. May function as a GTPase-activating protein. The sequence is that of StAR-related lipid transfer protein 13 (Stard13) from Mus musculus (Mouse).